A 311-amino-acid chain; its full sequence is Avirulence protein ATR1 (311 aa).

The N-terminal stretch at 1 to 15 (MRVCYFVLVPSVALA) is a signal peptide. The RxLR-dEER signature appears at 48-62 (RALRAQTALDDDEER). WY domain regions lie at residues 127 to 209 (DEAL…VKCV) and 210 to 311 (ESED…IYSV).

Belongs to the RxLR effector family. As to quaternary structure, monomer. Interacts with defense protein RPP1 from several ecotypes including RPP1-NdA, RPP1-WsB, RPP1-EstA and RPP1-ZdrA, via their leucine-rich repeats (LLRs).

Its subcellular location is the secreted. The protein resides in the host cytoplasm. Functionally, secreted effector that acts as an elicitor of hypersensitive response (HR) specifically on plants carrying both defense protein RPP1 from several ecotypes including RPP1-NdA, RPP1-WsB, RPP1-EstA and RPP1-ZdrA. This is Avirulence protein ATR1 from Hyaloperonospora arabidopsidis (strain Emoy2) (Downy mildew agent).